Here is a 329-residue protein sequence, read N- to C-terminus: Glutamyl-Q tRNA(Asp) synthetase (329 aa).

L-glutamate contacts are provided by residues 8–12 and E44; that span reads RLAPS. Positions 11-21 match the 'HIGH' region motif; it reads PSPTGAQHLGN. The Zn(2+) site is built by C100, C102, Y129, and C133. L-glutamate is bound by residues Y196 and R214. Residues 252–256 carry the 'KMSKS' region motif; the sequence is RLAKR. K255 is a binding site for ATP.

It belongs to the class-I aminoacyl-tRNA synthetase family. GluQ subfamily. It depends on Zn(2+) as a cofactor.

Its function is as follows. Catalyzes the tRNA-independent activation of glutamate in presence of ATP and the subsequent transfer of glutamate onto a tRNA(Asp). Glutamate is transferred on the 2-amino-5-(4,5-dihydroxy-2-cyclopenten-1-yl) moiety of the queuosine in the wobble position of the QUC anticodon. This Rhodopirellula baltica (strain DSM 10527 / NCIMB 13988 / SH1) protein is Glutamyl-Q tRNA(Asp) synthetase.